Consider the following 269-residue polypeptide: Tryptophan synthase alpha chain (269 aa).

Active-site proton acceptor residues include glutamate 49 and aspartate 60.

This sequence belongs to the TrpA family. Tetramer of two alpha and two beta chains.

The enzyme catalyses (1S,2R)-1-C-(indol-3-yl)glycerol 3-phosphate + L-serine = D-glyceraldehyde 3-phosphate + L-tryptophan + H2O. The protein operates within amino-acid biosynthesis; L-tryptophan biosynthesis; L-tryptophan from chorismate: step 5/5. The alpha subunit is responsible for the aldol cleavage of indoleglycerol phosphate to indole and glyceraldehyde 3-phosphate. The sequence is that of Tryptophan synthase alpha chain from Delftia acidovorans (strain DSM 14801 / SPH-1).